A 323-amino-acid chain; its full sequence is NADH-cytochrome b5 reductase 2 (323 aa).

The helical transmembrane segment at 32 to 48 (LAPIYVAVGLTGLGVGL) threads the bilayer. In terms of domain architecture, FAD-binding FR-type spans 72 to 177 (QGWVDLKLAQ…KGPIPKYPWE (106 aa)). 180 to 215 (KHKHICLIAGGTGITPMYQLARKIFKDPEDQTKVTL) is a binding site for FAD.

Belongs to the flavoprotein pyridine nucleotide cytochrome reductase family. FAD serves as cofactor.

It localises to the mitochondrion outer membrane. It carries out the reaction 2 Fe(III)-[cytochrome b5] + NADH = 2 Fe(II)-[cytochrome b5] + NAD(+) + H(+). In terms of biological role, may mediate the reduction of outer membrane cytochrome b5. The polypeptide is NADH-cytochrome b5 reductase 2 (mcr1) (Neosartorya fischeri (strain ATCC 1020 / DSM 3700 / CBS 544.65 / FGSC A1164 / JCM 1740 / NRRL 181 / WB 181) (Aspergillus fischerianus)).